A 403-amino-acid chain; its full sequence is Phosphoglycerate kinase (403 aa).

Substrate is bound by residues 21-23, Arg36, 59-62, Arg119, and Arg159; these read DFN and HLGR. ATP-binding positions include Lys214, Gly301, Glu332, and 359-362; that span reads GGDS.

The protein belongs to the phosphoglycerate kinase family. In terms of assembly, monomer.

It is found in the cytoplasm. The catalysed reaction is (2R)-3-phosphoglycerate + ATP = (2R)-3-phospho-glyceroyl phosphate + ADP. Its pathway is carbohydrate degradation; glycolysis; pyruvate from D-glyceraldehyde 3-phosphate: step 2/5. This chain is Phosphoglycerate kinase, found in Lactobacillus delbrueckii subsp. lactis.